Consider the following 341-residue polypeptide: Phenylalanine--tRNA ligase alpha subunit (341 aa).

Residue E252 coordinates Mg(2+).

This sequence belongs to the class-II aminoacyl-tRNA synthetase family. Phe-tRNA synthetase alpha subunit type 1 subfamily. Tetramer of two alpha and two beta subunits. It depends on Mg(2+) as a cofactor.

It is found in the cytoplasm. The enzyme catalyses tRNA(Phe) + L-phenylalanine + ATP = L-phenylalanyl-tRNA(Phe) + AMP + diphosphate + H(+). The polypeptide is Phenylalanine--tRNA ligase alpha subunit (Malacoplasma penetrans (strain HF-2) (Mycoplasma penetrans)).